The primary structure comprises 466 residues: Catalase ifgD (466 aa).

The interval 1–22 (MAPNYAKKCPVMGKAPSSGHSS) is disordered. The active site involves histidine 48. Tyrosine 337 contacts heme.

This sequence belongs to the catalase family. The cofactor is heme.

It participates in alkaloid biosynthesis; ergot alkaloid biosynthesis. Catalase; part of the gene cluster that mediates the biosynthesis of isofumigaclavines, fungal ergot alkaloids. The tryptophan dimethylallyltransferase ifgA catalyzes the first step of ergot alkaloid biosynthesis by condensing dimethylallyl diphosphate (DMAP) and tryptophan to form 4-dimethylallyl-L-tryptophan. The second step is catalyzed by the methyltransferase ifgB that methylates 4-dimethylallyl-L-tryptophan in the presence of S-adenosyl-L-methionine, resulting in the formation of N-methyl-dimethylallyl-L-tryptophan. The catalase ifgD and the FAD-dependent oxidoreductase ifgC then transform N-methyl-dimethylallyl-L-tryptophan to chanoclavine-I which is further oxidized by ifgE in the presence of NAD(+), resulting in the formation of chanoclavine-I aldehyde. The chanoclavine-I aldehyde reductases ifgG and/or fgaOx3 reduce chanoclavine-I aldehyde to dihydrochanoclavine-I aldehyde that spontaneously dehydrates to form 6,8-dimethyl-6,7-didehydroergoline. The festuclavine dehydrogenases ifgF1 and/or ifgF2 then catalyze the reduction of 6,8-dimethyl-6,7-didehydroergoline to form festuclavine. Hydrolysis of festuclavine by a yet undetermined cytochrome P450 monooxygenase (called ifgH) then leads to the formation of isofumigaclavine B which is in turn acetylated by ifgI to isofumigaclavine A. Penicillium roqueforti has interestingly at least two sets of genes for the consumption of chanoclavine-I aldehyde on three different loci, the OYEs ifgG/fgaOx3 and the festuclavine synthase homologs ifgF1/ifgF2. The reason for the duplication of these genes is unclear, probably to ensure the conversion of chanoclavine-I aldehyde by differential gene expression under various environmental conditions. This Penicillium roqueforti (strain FM164) protein is Catalase ifgD.